Here is a 164-residue protein sequence, read N- to C-terminus: UPF0304 protein PC1_2778 (164 aa).

This sequence belongs to the UPF0304 family.

The polypeptide is UPF0304 protein PC1_2778 (Pectobacterium carotovorum subsp. carotovorum (strain PC1)).